Reading from the N-terminus, the 273-residue chain is Phycobilisome 32.1 kDa linker polypeptide, phycocyanin-associated, rod 2 (273 aa).

A PBS-linker domain is found at 1–180 (MTSLVSAQRL…VYRGYATSDR (180 aa)). Positions 220-273 (NQMYRLQVIQGAAPGRGTRVRRGKAEYLVSYDNLSAKLQQINRQGDTVTMISLA) constitute a CpcD-like domain.

This sequence belongs to the phycobilisome linker protein family. Part of 2 PBS rod complexes, the conventional CpcG-PBS rod and a photosystem I-specific CpcL-PBS rod, both of which include ferredoxin--NADP reductase (petH). CpcG-PBS has on average 3 stacked phycocyanin hexamers (PC, CpcA and CpcB). Linker CpcG connects the PC stack to the thylakoid, the hexamers are linked by 1 copy of CpcC1, 1 copy of CpcC2 and the stack is terminated by a single copy of CpcD. The CpcL-PBS has on average 5 stacked phycocyanin hexamers (PC, CpcA and CpcB). Linker CpcL connects the PC stack to the thylakoid, the hexamers are linked by 1 copy of CpcC1, 3 copies of CpcC2 and the stack is terminated by a single copy of CpcD. Interacts with the C-phycocyanin (PC) beta subunit (cpcB), it may fit into the center of the PC hexamer.

The protein resides in the cellular thylakoid membrane. Its function is as follows. Rod linker protein, associated with phycocyanin. Linker polypeptides determine the state of aggregation and the location of the disk-shaped phycobiliprotein units within the phycobilisome and modulate their spectroscopic properties in order to mediate a directed and optimal energy transfer. This chain is Phycobilisome 32.1 kDa linker polypeptide, phycocyanin-associated, rod 2 (cpcC2), found in Synechocystis sp. (strain ATCC 27184 / PCC 6803 / Kazusa).